The chain runs to 298 residues: MLYQQIARNKRKTALIMVLFVVILTLVGAGLGYLFSNRPWMGIIIALAGSLIYLLIMWQNPANMIMSLNHAQEIQEADNPELWHIVEDMAMVARVPMPRVYIIPDPSPNAFATGRDPNHSAVAVTEGILQLMNREELEGVLGHELSHVRNYDILLSTIAVVLVGVISFISGMASRYIWFAGGSRDSDDDRDSNAFEMIFKVVAIVFVLILGPLSASLAQMALSRNREYLADASSVELTRNPQGLISALRKIENSQPMKQADRSSAGLYIENPFHNHGLSHLFDTHPPTEDRIKRLEQM.

2 consecutive transmembrane segments (helical) span residues 15-35 and 39-59; these read LIMV…GYLF and PWMG…IMWQ. H143 provides a ligand contact to Zn(2+). Residue E144 is part of the active site. Residue H147 coordinates Zn(2+). The next 2 helical transmembrane spans lie at 153-173 and 197-217; these read ILLS…SGMA and MIFK…SASL. E227 contributes to the Zn(2+) binding site.

The protein belongs to the peptidase M48B family. It depends on Zn(2+) as a cofactor.

The protein localises to the cell membrane. This chain is Protease HtpX homolog, found in Lactobacillus helveticus (strain DPC 4571).